A 435-amino-acid polypeptide reads, in one-letter code: Homoserine dehydrogenase (435 aa).

NADPH-binding residues include Thr13, Val14, Arg43, and Lys105. Val14 contributes to the NAD(+) binding site. Residues Val14, Arg43, and Lys105 each coordinate NADP(+). 4 residues coordinate Na(+): Glu129, Val132, Gly134, and Ile136. Lys204 serves as the catalytic Proton donor. Disordered stretches follow at residues 255–274 (ARGV…TPDR) and 377–402 (RCDD…PDHV). Basic and acidic residues-rich tracts occupy residues 262-274 (RAPD…TPDR) and 377-391 (RCDD…AERR).

It belongs to the homoserine dehydrogenase family. A metal cation serves as cofactor.

The catalysed reaction is L-homoserine + NADP(+) = L-aspartate 4-semialdehyde + NADPH + H(+). The enzyme catalyses L-homoserine + NAD(+) = L-aspartate 4-semialdehyde + NADH + H(+). It participates in amino-acid biosynthesis; L-methionine biosynthesis via de novo pathway; L-homoserine from L-aspartate: step 3/3. It functions in the pathway amino-acid biosynthesis; L-threonine biosynthesis; L-threonine from L-aspartate: step 3/5. Its function is as follows. Catalyzes the conversion of L-aspartate-beta-semialdehyde (L-Asa) to L-homoserine (L-Hse), the third step in the biosynthesis of threonine and methionine from aspartate. The protein is Homoserine dehydrogenase (hom) of Methylobacillus glycogenes.